Here is a 428-residue protein sequence, read N- to C-terminus: Forkhead box protein B2 (428 aa).

A DNA-binding region (fork-head) is located at residues 12 to 103; the sequence is QKPPYSYISL…GDMFENGSFL (92 aa). Disordered regions lie at residues 118–217 and 408–428; these read HLHS…MQEA and PTAA…LVHS. The segment covering 136 to 163 has biased composition (basic residues); sequence LHPHHPHHAHHHHHHHHHAAHHHHHHHP. Pro residues-rich tracts occupy residues 164 to 174 and 183 to 192; these read PQPPPPPPPHM and APAPQPPHLP. Residues 193 to 217 show a composition bias toward low complexity; sequence SQPAQQPQPQSQPPQTSHPGKMQEA.

The protein localises to the nucleus. In terms of biological role, transcription factor. The protein is Forkhead box protein B2 (Foxb2) of Mus musculus (Mouse).